The sequence spans 370 residues: Dual-specificity RNA methyltransferase RlmN (370 aa).

Glu-93 (proton acceptor) is an active-site residue. In terms of domain architecture, Radical SAM core spans Glu-99–Asp-337. A disulfide bridge connects residues Cys-106 and Cys-343. [4Fe-4S] cluster is bound by residues Cys-113, Cys-117, and Cys-120. S-adenosyl-L-methionine-binding positions include Gly-167–Glu-168, Ser-199, Ser-221–His-223, and Asn-300. Cys-343 serves as the catalytic S-methylcysteine intermediate.

Belongs to the radical SAM superfamily. RlmN family. [4Fe-4S] cluster is required as a cofactor.

It localises to the cytoplasm. The catalysed reaction is adenosine(2503) in 23S rRNA + 2 reduced [2Fe-2S]-[ferredoxin] + 2 S-adenosyl-L-methionine = 2-methyladenosine(2503) in 23S rRNA + 5'-deoxyadenosine + L-methionine + 2 oxidized [2Fe-2S]-[ferredoxin] + S-adenosyl-L-homocysteine. The enzyme catalyses adenosine(37) in tRNA + 2 reduced [2Fe-2S]-[ferredoxin] + 2 S-adenosyl-L-methionine = 2-methyladenosine(37) in tRNA + 5'-deoxyadenosine + L-methionine + 2 oxidized [2Fe-2S]-[ferredoxin] + S-adenosyl-L-homocysteine. Its function is as follows. Specifically methylates position 2 of adenine 2503 in 23S rRNA and position 2 of adenine 37 in tRNAs. m2A2503 modification seems to play a crucial role in the proofreading step occurring at the peptidyl transferase center and thus would serve to optimize ribosomal fidelity. This chain is Dual-specificity RNA methyltransferase RlmN, found in Francisella tularensis subsp. holarctica (strain LVS).